Reading from the N-terminus, the 127-residue chain is QAVLYPSIYSILSKSKVRVQELEPVEGAAVPADTKKAEIKEKEHEVITHGLPVPYSSVVQPIVSSVVVNPGVIPAVVPVDAPTPADTKKAEISDNAVVAYHAAISPLSVVSHPVVSPLVHVPQVVYV.

Gln1 bears the Pyrrolidone carboxylic acid mark. 2 consecutive repeat copies span residues 31-39 (PADTKKAEI) and 84-92 (PADTKKAEI).

This is Cuticle protein 4 from Blaberus craniifer (Death's head cockroach).